Consider the following 95-residue polypeptide: uncharacterized protein (95 aa).

Residues 1-73 (MAHFKDDLQT…AQQPSMRTEL (73 aa)) form a disordered region. Composition is skewed to polar residues over residues 42–52 (SNHSPSVQESP) and 62–73 (GSAQQPSMRTEL).

This is an uncharacterized protein from Homo sapiens (Human).